A 548-amino-acid polypeptide reads, in one-letter code: MSDMGGLKNLVANTDYLKAQSLDEKEIKKRRCSLGLPHLGNCTDVRVSVSKGFEDICEQQPIGRACFRQFLSVSSPEYLAAAELLDELNCWNLAEAEAKEEARLNIINKFCKADSKSFLAFLTEDEAEKCKAVSEKDFEEVMMGQVKEATQKFLRGQPFEEYQTSLFFDRFVQWKKFEKQPITDKYFYEFRTLGKGGFGEVCGVQVKTTGQMYACKKLDKKRLKKKSGEKMALLEKKILEMVNSLFIVNLAYAFDTKTHLCLVMTLMSGGDLKYHIFHVGEVGIEMERIIHYTAQITSGILHLHSMDIVYRDMKPENVLLDCQGQCRLSDLGLAVELPNGKTTTQKAGTKGYMAPEILKQEPYRTSVDWWALGCSIYEMVAGRVPFRDHKEKVAKEELLRRTLEDEVKFEHRNFDAPSKDIISLFLKRNIEDRLGSNDDPRKHEFFKSINFPRLEAGLIPPPWEPKANVVYAKDTGDIREFSDVKGVKFDANDEKFFKEFSTGVVPIAWQQEMIDSGLFDELSDPNRKESAAGLEDEEQQKSKSCTLL.

Serine 33 is modified (phosphoserine; by PKA). Residues 53–172 (FEDICEQQPI…QTSLFFDRFV (120 aa)) form the RGS domain. The region spanning 187-446 (FYEFRTLGKG…NDDPRKHEFF (260 aa)) is the Protein kinase domain. Residues 193–201 (LGKGGFGEV) and lysine 216 contribute to the ATP site. The active-site Proton acceptor is the aspartate 312. Residues 447–512 (KSINFPRLEA…GVVPIAWQQE (66 aa)) form the AGC-kinase C-terminal domain. The tract at residues 520 to 548 (DELSDPNRKESAAGLEDEEQQKSKSCTLL) is disordered. A Cysteine methyl ester modification is found at cysteine 545. Residue cysteine 545 is the site of S-geranylgeranyl cysteine attachment. Positions 546–548 (TLL) are cleaved as a propeptide — removed in mature form.

Belongs to the protein kinase superfamily. AGC Ser/Thr protein kinase family. GPRK subfamily. In terms of processing, phosphorylation at Ser-33 is regulated by light and activated by cAMP. In terms of tissue distribution, expressed in the eyes (at protein level). Expressed in the eyes, the pineal gland and in the brain.

It is found in the membrane. It catalyses the reaction L-threonyl-[rhodopsin] + ATP = O-phospho-L-threonyl-[rhodopsin] + ADP + H(+). The catalysed reaction is L-seryl-[rhodopsin] + ATP = O-phospho-L-seryl-[rhodopsin] + ADP + H(+). Retina-specific kinase involved in the shutoff of the photoresponse and adaptation to changing light conditions via cone opsin phosphorylation, including rhodopsin (RHO). This chain is Rhodopsin kinase grk7-b (grk7b), found in Danio rerio (Zebrafish).